The sequence spans 385 residues: Ethanolamine kinase 2 (385 aa).

Belongs to the choline/ethanolamine kinase family.

The enzyme catalyses ethanolamine + ATP = phosphoethanolamine + ADP + H(+). It functions in the pathway phospholipid metabolism; phosphatidylethanolamine biosynthesis; phosphatidylethanolamine from ethanolamine: step 1/3. In terms of biological role, highly specific for ethanolamine phosphorylation. Does not have choline kinase activity. The chain is Ethanolamine kinase 2 (Etnk2) from Rattus norvegicus (Rat).